The following is a 276-amino-acid chain: Rhomboid protease GlpG (276 aa).

The next 6 helical transmembrane spans lie at 94 to 114 (GPFTWAILLICIAVFILQNLL), 142 to 162 (AFMHFSLMHILFNLLWWWYLG), 169 to 189 (IGSGKLVVITVISALLSGFVQ), 192 to 212 (FSGPWFGGLSGVVYALMGYVW), 229 to 249 (LILFSLVWLIAGWFDVFGMAI), and 252 to 272 (GAHVAGLATGLAMAFVDTLHG). S201 acts as the Nucleophile in catalysis. H254 is a catalytic residue.

It belongs to the peptidase S54 family.

The protein resides in the cell inner membrane. It carries out the reaction Cleaves type-1 transmembrane domains using a catalytic dyad composed of serine and histidine that are contributed by different transmembrane domains.. Its function is as follows. Rhomboid-type serine protease that catalyzes intramembrane proteolysis. This chain is Rhomboid protease GlpG, found in Klebsiella pneumoniae (strain 342).